Consider the following 239-residue polypeptide: tRNA (guanine-N(7)-)-methyltransferase (239 aa).

Residues Glu69, Glu94, Asp121, and Asp144 each contribute to the S-adenosyl-L-methionine site. The active site involves Asp144. Lys148 provides a ligand contact to substrate. An interaction with RNA region spans residues 150-155; it reads RHNKRR. Residues Asp180 and 217 to 220 contribute to the substrate site; that span reads TKFE.

This sequence belongs to the class I-like SAM-binding methyltransferase superfamily. TrmB family. In terms of assembly, monomer.

It catalyses the reaction guanosine(46) in tRNA + S-adenosyl-L-methionine = N(7)-methylguanosine(46) in tRNA + S-adenosyl-L-homocysteine. It participates in tRNA modification; N(7)-methylguanine-tRNA biosynthesis. In terms of biological role, catalyzes the formation of N(7)-methylguanine at position 46 (m7G46) in tRNA. This Yersinia pseudotuberculosis serotype I (strain IP32953) protein is tRNA (guanine-N(7)-)-methyltransferase.